The chain runs to 344 residues: GPALPP motifs-containing protein 1 (344 aa).

A disordered region spans residues Met-1–Lys-309. At Ala-2 the chain carries N-acetylalanine. A GPALPP motif 1 motif is present at residues Gly-7–Pro-12. At Ser-28 the chain carries Phosphoserine. A GPALPP motif 2 motif is present at residues Gly-30–Pro-35. Composition is skewed to acidic residues over residues Gly-58–Thr-67 and Asp-80–Gly-93. Residues Gly-96–Pro-101 carry the GPALPP motif 3 motif. Ser-109 carries the post-translational modification Phosphoserine. Residues Pro-111–Pro-120 are compositionally biased toward pro residues. Positions Gly-116–Pro-121 match the GPALPP motif 4 motif. Over residues Gln-128 to Pro-137 the composition is skewed to basic and acidic residues. Thr-142 is modified (phosphothreonine). Phosphoserine is present on residues Ser-144 and Ser-145. 4 stretches are compositionally biased toward basic and acidic residues: residues Glu-167–Val-191, Pro-231–Ala-265, Glu-273–Ile-283, and Lys-291–Lys-309. Residue Lys-275 forms a Glycyl lysine isopeptide (Lys-Gly) (interchain with G-Cter in SUMO2) linkage. Lys-312 is covalently cross-linked (Glycyl lysine isopeptide (Lys-Gly) (interchain with G-Cter in SUMO2)).

This chain is GPALPP motifs-containing protein 1 (GPALPP1), found in Pongo abelii (Sumatran orangutan).